Consider the following 359-residue polypeptide: Molybdenum import ATP-binding protein ModC (359 aa).

Residues 1 to 229 (MLELNFSQQL…SALRPWLQRE (229 aa)) enclose the ABC transporter domain. 31-38 (GLSGAGKT) lines the ATP pocket. Positions 289-354 (SSSIRNILPV…IKSVSFNRQN (66 aa)) constitute a Mop domain.

The protein belongs to the ABC transporter superfamily. Molybdate importer (TC 3.A.1.8) family. The complex is composed of two ATP-binding proteins (ModC), two transmembrane proteins (ModB) and a solute-binding protein (ModA).

It is found in the cell inner membrane. It carries out the reaction molybdate(out) + ATP + H2O = molybdate(in) + ADP + phosphate + H(+). Part of the ABC transporter complex ModABC involved in molybdenum import. Responsible for energy coupling to the transport system. The chain is Molybdenum import ATP-binding protein ModC from Yersinia pseudotuberculosis serotype I (strain IP32953).